The sequence spans 534 residues: NAD(P)H-quinone oxidoreductase chain 4 (534 aa).

14 helical membrane passes run 12 to 32 (FPWL…IPFF), 44 to 64 (FALS…INGF), 94 to 114 (ISMP…LAAW), 120 to 140 (PKLF…VFAV), 144 to 164 (LLFF…LAIW), 176 to 196 (FIIY…AMGF), 220 to 240 (ILCY…VPLH), 251 to 271 (TAPV…YALL), 285 to 305 (FAPL…LTSF), 314 to 334 (IAYS…SFSS), 340 to 360 (AMLQ…LVGA), 384 to 404 (FALW…SGFV), 425 to 445 (VIMA…LLSM), and 472 to 492 (VYII…PRLV).

It belongs to the complex I subunit 4 family.

The protein localises to the cellular thylakoid membrane. The catalysed reaction is a plastoquinone + NADH + (n+1) H(+)(in) = a plastoquinol + NAD(+) + n H(+)(out). It catalyses the reaction a plastoquinone + NADPH + (n+1) H(+)(in) = a plastoquinol + NADP(+) + n H(+)(out). NDH-1 shuttles electrons from NAD(P)H, via FMN and iron-sulfur (Fe-S) centers, to quinones in the respiratory chain. The immediate electron acceptor for the enzyme in this species is believed to be plastoquinone. Couples the redox reaction to proton translocation (for every two electrons transferred, four hydrogen ions are translocated across the cytoplasmic membrane), and thus conserves the redox energy in a proton gradient. This is NAD(P)H-quinone oxidoreductase chain 4 from Prochlorococcus marinus (strain MIT 9312).